The sequence spans 247 residues: MPKLVLVRHGQSEWNEKNLFTGWVDVKLSAKGQQEAARAGELLKEKKVYPDVLYTSKLSRAIQTANIALEKADRLWIPVNRSWRLNERHYGDLQGKDKAETLKKFGEEKFNTYRRSFDVPPPPIDASSPFSQKGDERYKYVDPNVLPETESLALVIDRLLPYWQDVIAKDLLSGKTVMIAAHGNSLRGLVKHLEGISDADIAKLNIPTGIPLVFELDENLKPSKPSYYLDPEAAAAGAAAVANQGKK.

Substrate-binding positions include 8–15 and 21–22; these read RHGQSEWN and TG. H9 acts as the Tele-phosphohistidine intermediate in catalysis. S12 is subject to Phosphoserine. Residue K31 forms a Glycyl lysine isopeptide (Lys-Gly) (interchain with G-Cter in ubiquitin) linkage. Y49 carries the phosphotyrosine modification. K57 participates in a covalent cross-link: Glycyl lysine isopeptide (Lys-Gly) (interchain with G-Cter in ubiquitin). Residue R60 coordinates substrate. K71 is covalently cross-linked (Glycyl lysine isopeptide (Lys-Gly) (interchain with G-Cter in ubiquitin)). E87 (proton donor/acceptor) is an active-site residue. Substrate contacts are provided by residues 87–90, K98, and 114–115; these read ERHY and RR. S116, S127, and S128 each carry phosphoserine. Residues K139 and K175 each participate in a glycyl lysine isopeptide (Lys-Gly) (interchain with G-Cter in ubiquitin) cross-link. 183–184 serves as a coordination point for substrate; that stretch reads GN. S185 carries the post-translational modification Phosphoserine. K191 participates in a covalent cross-link: Glycyl lysine isopeptide (Lys-Gly) (interchain with G-Cter in ubiquitin). S197 carries the post-translational modification Phosphoserine.

It belongs to the phosphoglycerate mutase family. BPG-dependent PGAM subfamily. In terms of assembly, homotetramer: dimer of dimers.

Its subcellular location is the cytoplasm. The protein resides in the mitochondrion outer membrane. The protein localises to the mitochondrion intermembrane space. It catalyses the reaction (2R)-2-phosphoglycerate = (2R)-3-phosphoglycerate. It participates in carbohydrate degradation; glycolysis; pyruvate from D-glyceraldehyde 3-phosphate: step 3/5. Its activity is regulated as follows. Inhibited by inositol hexakisphosphate and benzene tri-, tetra- and hexacarboxylates. In terms of biological role, interconversion of 3- and 2-phosphoglycerate with 2,3-bisphosphoglycerate as the primer of the reaction. Can also catalyze the reaction of EC 5.4.2.4 (synthase), but with a reduced activity. This is Phosphoglycerate mutase 1 (GPM1) from Saccharomyces cerevisiae (strain ATCC 204508 / S288c) (Baker's yeast).